Here is a 140-residue protein sequence, read N- to C-terminus: Large ribosomal subunit protein uL16 (140 aa).

This sequence belongs to the universal ribosomal protein uL16 family. Part of the 50S ribosomal subunit.

In terms of biological role, binds 23S rRNA and is also seen to make contacts with the A and possibly P site tRNAs. In Phytoplasma australiense, this protein is Large ribosomal subunit protein uL16.